Consider the following 325-residue polypeptide: DNA repair and recombination protein RadA (325 aa).

Residue 107–114 coordinates ATP; it reads GEFGSGKT.

This sequence belongs to the eukaryotic RecA-like protein family.

In terms of biological role, involved in DNA repair and in homologous recombination. Binds and assemble on single-stranded DNA to form a nucleoprotein filament. Hydrolyzes ATP in a ssDNA-dependent manner and promotes DNA strand exchange between homologous DNA molecules. This chain is DNA repair and recombination protein RadA, found in Methanosarcina acetivorans (strain ATCC 35395 / DSM 2834 / JCM 12185 / C2A).